Here is a 548-residue protein sequence, read N- to C-terminus: Luciferin 4-monooxygenase (548 aa).

Positions 546–548 (AKM) match the Microbody targeting signal motif.

This sequence belongs to the ATP-dependent AMP-binding enzyme family. It depends on Mg(2+) as a cofactor.

It localises to the peroxisome. It catalyses the reaction firefly D-luciferin + ATP + O2 = firefly oxyluciferin + hnu + AMP + CO2 + diphosphate. Its function is as follows. Produces green light with a wavelength of 544 nm. In Nipponoluciola cruciata (Genji firefly), this protein is Luciferin 4-monooxygenase.